A 573-amino-acid polypeptide reads, in one-letter code: Membrane protein insertase YidC (573 aa).

The helical transmembrane segment at 6–26 threads the bilayer; the sequence is VFLIFAWLMVAALLWMEWGKD. A disordered region spans residues 63-82; it reads PQAGSPAAVPATSTTTATPA. Transmembrane regions (helical) follow at residues 355-375, 379-399, 446-466, 488-508, and 524-544; these read FSIM…LHSF, WGWA…PLSA, GGCL…WVLV, PYFI…KLTP, and PLVF…YWVV.

The protein belongs to the OXA1/ALB3/YidC family. Type 1 subfamily. Interacts with the Sec translocase complex via SecD. Specifically interacts with transmembrane segments of nascent integral membrane proteins during membrane integration.

Its subcellular location is the cell inner membrane. Required for the insertion and/or proper folding and/or complex formation of integral membrane proteins into the membrane. Involved in integration of membrane proteins that insert both dependently and independently of the Sec translocase complex, as well as at least some lipoproteins. Aids folding of multispanning membrane proteins. This is Membrane protein insertase YidC from Xanthomonas campestris pv. campestris (strain 8004).